An 87-amino-acid polypeptide reads, in one-letter code: uncharacterized protein (87 aa).

Residues 63-83 form a helical membrane-spanning segment; the sequence is IVLALVLGVFSLVGLIFIIYF.

It localises to the membrane. This is an uncharacterized protein from Dictyostelium discoideum (Social amoeba).